Reading from the N-terminus, the 235-residue chain is STARD3 N-terminal-like protein (235 aa).

Met1 is subject to N-acetylmethionine. Residues 1–20 (MNHLPEHMENTLTGSQSSHA) are disordered. Residues 1 to 53 (MNHLPEHMENTLTGSQSSHASLRDIHSINPAQLMARIESYEGREKKGISDVRR) lie on the Cytoplasmic side of the membrane. The span at 10–20 (NTLTGSQSSHA) shows a compositional bias: polar residues. Residues Ser15, Ser21, and Ser27 each carry the phosphoserine modification. Residues 48-218 (ISDVRRTFCL…YSPPESEAGS (171 aa)) form the MENTAL domain. A helical membrane pass occupies residues 54–74 (TFCLFVTFDLLFVTLLWIIEL). At 75 to 97 (NVNGGIENTLKKEVIHYDYYSSY) the chain is on the extracellular side. The chain crosses the membrane as a helical span at residues 98–118 (FDIFLLAVFRFKVLILGYAVC). At 119 to 122 (RLRH) the chain is on the cytoplasmic side. A helical transmembrane segment spans residues 123 to 143 (WWAIALTTAVTSAFLLAKVIL). Over 144 to 150 (SKLFSQG) the chain is Extracellular. Residues 151-171 (AFGYVLPIISFILAWIETWFL) form a helical membrane-spanning segment. The Cytoplasmic portion of the chain corresponds to 172–235 (DFKVLPQEAE…QESEKPLLEL (64 aa)). Position 193 is a phosphoserine (Ser193). The tract at residues 202–235 (GLSDGQFYSPPESEAGSEEEAEEKQESEKPLLEL) is disordered. An FFAT motif is present at residues 208-213 (FYSPPE). Residues 225-235 (KQESEKPLLEL) are compositionally biased toward basic and acidic residues.

The protein belongs to the STARD3 family. In terms of assembly, homodimer. Interacts (via the MENTAL domain) with STARD3NL. Interacts (via FFAT motif) with VAPA. Interacts (via FFAT motif) with VAPB. Interacts (via FFAT motif) with MOSPD2 (via MSP domain).

It localises to the late endosome membrane. Functionally, tethering protein that creates contact site between the endoplasmic reticulum and late endosomes: localizes to late endosome membranes and contacts the endoplasmic reticulum via interaction with VAPA and VAPB. The sequence is that of STARD3 N-terminal-like protein from Mus musculus (Mouse).